We begin with the raw amino-acid sequence, 432 residues long: Gamma-glutamyl phosphate reductase (432 aa).

It belongs to the gamma-glutamyl phosphate reductase family.

It localises to the cytoplasm. It carries out the reaction L-glutamate 5-semialdehyde + phosphate + NADP(+) = L-glutamyl 5-phosphate + NADPH + H(+). Its pathway is amino-acid biosynthesis; L-proline biosynthesis; L-glutamate 5-semialdehyde from L-glutamate: step 2/2. Its function is as follows. Catalyzes the NADPH-dependent reduction of L-glutamate 5-phosphate into L-glutamate 5-semialdehyde and phosphate. The product spontaneously undergoes cyclization to form 1-pyrroline-5-carboxylate. The protein is Gamma-glutamyl phosphate reductase of Methylorubrum extorquens (strain PA1) (Methylobacterium extorquens).